Here is a 266-residue protein sequence, read N- to C-terminus: MKAVVLTLAVLFLTGSQARHFWQQDEPQSPWDRVKDLATVYVDAVKDGGRDYVAQFEASALGKQLNLKLLDNWDSLSGTVAKLREQIGPVTQEFWDNLEKETEALRQEMSKDLEEVKQKVQPYLDEFQKKWHEEVELYRQKVAPLGTELREGARQKLQELQEKLTPLGEELRDRARTHVDALRAHLAPYSDQLRERLATRLQALKEGGSASLAEYHAKASEHLSALSEKAKPALEDLRQGLLPVLESFKVSLLAAVDEAAKKLNTQ.

The signal sequence occupies residues 1-18 (MKAVVLTLAVLFLTGSQA). 2 tandem repeats follow at residues 67–88 (LKLLDNWDSLSGTVAKLREQIG) and 89–110 (PVTQEFWDNLEKETEALRQEMS). Positions 67–266 (LKLLDNWDSL…DEAAKKLNTQ (200 aa)) are 10 X approximate tandem repeats. Residue Met-109 is modified to Methionine sulfoxide. Residues 111–121 (KDLEEVKQKVQ) form a 3; half-length repeat. Tandem repeats lie at residues 122–143 (PYLDEFQKKWHEEVELYRQKVA), 144–165 (PLGTELREGARQKLQELQEKLT), 166–187 (PLGEELRDRARTHVDALRAHLA), 188–209 (PYSDQLRERLATRLQALKEGGS), and 210–231 (ASLAEYHAKASEHLSALSEKAK). The 9; half-length repeat unit spans residues 232 to 242 (PALEDLRQGLL). Copy 10 of the repeat occupies 243–266 (PVLESFKVSLLAAVDEAAKKLNTQ).

It belongs to the apolipoprotein A1/A4/E family. As to quaternary structure, homodimer. Interacts with APOA1BP and CLU. Component of a sperm activating protein complex (SPAP), consisting of APOA1, an immunoglobulin heavy chain, an immunoglobulin light chain and albumin. Interacts with NDRG1. Interacts with SCGB3A2. Interacts with NAXE and YJEFN3. In terms of processing, glycosylated. Palmitoylated. Post-translationally, phosphorylation sites are present in the extracellular medium.

The protein resides in the secreted. In terms of biological role, participates in the reverse transport of cholesterol from tissues to the liver for excretion by promoting cholesterol efflux from tissues and by acting as a cofactor for the lecithin cholesterol acyltransferase (LCAT). As part of the SPAP complex, activates spermatozoa motility. This Mustela putorius furo (European domestic ferret) protein is Apolipoprotein A-I (APOA1).